We begin with the raw amino-acid sequence, 211 residues long: Large ribosomal subunit protein uL3 (211 aa).

At Gln-150 the chain carries N5-methylglutamine.

Belongs to the universal ribosomal protein uL3 family. As to quaternary structure, part of the 50S ribosomal subunit. Forms a cluster with proteins L14 and L19. Methylated by PrmB.

Functionally, one of the primary rRNA binding proteins, it binds directly near the 3'-end of the 23S rRNA, where it nucleates assembly of the 50S subunit. The protein is Large ribosomal subunit protein uL3 of Pseudomonas syringae pv. syringae (strain B728a).